Reading from the N-terminus, the 454-residue chain is uncharacterized protein (454 aa).

The TRAM domain maps to 1 to 45 (MAAEGKAIAKVNDLVIFVPYVVPGDVVDLQIKRKKNKYAEAEAVK). [4Fe-4S] cluster is bound by residues Cys-58, Cys-64, Cys-67, and Cys-160. Residues Gln-286, Tyr-315, Glu-336, and Asp-385 each coordinate S-adenosyl-L-methionine. Cys-412 acts as the Nucleophile in catalysis.

Belongs to the class I-like SAM-binding methyltransferase superfamily. RNA M5U methyltransferase family.

This is an uncharacterized protein from Bacteroides thetaiotaomicron (strain ATCC 29148 / DSM 2079 / JCM 5827 / CCUG 10774 / NCTC 10582 / VPI-5482 / E50).